The sequence spans 91 residues: Small ribosomal subunit protein uS19 (91 aa).

The tract at residues 72–91 is disordered; it reads GEFSPTRTYTGHGSEKGKKK.

Belongs to the universal ribosomal protein uS19 family.

In terms of biological role, protein S19 forms a complex with S13 that binds strongly to the 16S ribosomal RNA. This chain is Small ribosomal subunit protein uS19, found in Mycoplasma mobile (strain ATCC 43663 / 163K / NCTC 11711) (Mesomycoplasma mobile).